The primary structure comprises 268 residues: Probable chemotaxis protein methyltransferase (268 aa).

Residues 1–262 (MIYSDAGIFL…GITTYRYTTK (262 aa)) enclose the CheR-type methyltransferase domain. Residues Asn-60, Thr-62, Arg-66, Glu-104, Asp-130, 188–189 (NL), and 205–206 (RN) contribute to the S-adenosyl-L-methionine site.

The enzyme catalyses L-glutamyl-[protein] + S-adenosyl-L-methionine = [protein]-L-glutamate 5-O-methyl ester + S-adenosyl-L-homocysteine. In terms of biological role, methylation of the membrane-bound methyl-accepting chemotaxis proteins (MCP) to form gamma-glutamyl methyl ester residues in MCP. In Rhizobium etli (strain ATCC 51251 / DSM 11541 / JCM 21823 / NBRC 15573 / CFN 42), this protein is Probable chemotaxis protein methyltransferase (cheRch1).